The sequence spans 230 residues: Orotidine 5'-phosphate decarboxylase (230 aa).

Residues D10, K32, 59–68 (DLKYHDIPNT), T119, R180, Q189, G209, and R210 each bind substrate. K61 (proton donor) is an active-site residue.

The protein belongs to the OMP decarboxylase family. Type 1 subfamily. In terms of assembly, homodimer.

It catalyses the reaction orotidine 5'-phosphate + H(+) = UMP + CO2. Its pathway is pyrimidine metabolism; UMP biosynthesis via de novo pathway; UMP from orotate: step 2/2. In terms of biological role, catalyzes the decarboxylation of orotidine 5'-monophosphate (OMP) to uridine 5'-monophosphate (UMP). The chain is Orotidine 5'-phosphate decarboxylase from Actinobacillus pleuropneumoniae serotype 5b (strain L20).